A 193-amino-acid polypeptide reads, in one-letter code: 3-isopropylmalate dehydratase small subunit (193 aa).

It belongs to the LeuD family. LeuD type 1 subfamily. As to quaternary structure, heterodimer of LeuC and LeuD.

The catalysed reaction is (2R,3S)-3-isopropylmalate = (2S)-2-isopropylmalate. Its pathway is amino-acid biosynthesis; L-leucine biosynthesis; L-leucine from 3-methyl-2-oxobutanoate: step 2/4. In terms of biological role, catalyzes the isomerization between 2-isopropylmalate and 3-isopropylmalate, via the formation of 2-isopropylmaleate. The polypeptide is 3-isopropylmalate dehydratase small subunit (Bacillus thuringiensis subsp. konkukian (strain 97-27)).